The chain runs to 411 residues: Eukaryotic initiation factor 4A-III (411 aa).

Methionine 1 is subject to N-acetylmethionine. The residue at position 2 (alanine 2) is an N-acetylalanine; in Eukaryotic initiation factor 4A-III, N-terminally processed. Residues serine 10 and serine 12 each carry the phosphoserine modification. Residue lysine 19 forms a Glycyl lysine isopeptide (Lys-Gly) (interchain with G-Cter in SUMO2) linkage. The short motif at 38 to 66 is the Q motif element; that stretch reads PTFDTMGLREDLLRGIYAYGFEKPSAIQQ. Residues lysine 60, glutamine 65, and 85–90 each bind ATP; that span reads GTGKTA. Positions 69–239 constitute a Helicase ATP-binding domain; sequence IKQIIKGRDV…NKFMTDPIRI (171 aa). Position 124 is an N6-acetyllysine (lysine 124). Residue lysine 152 forms a Glycyl lysine isopeptide (Lys-Gly) (interchain with G-Cter in SUMO2) linkage. Phosphothreonine is present on threonine 163. Residues 187 to 190 carry the DEAD box motif; that stretch reads DEAD. Residues lysine 198 and lysine 296 each carry the N6-acetyllysine modification. The region spanning 250-411 is the Helicase C-terminal domain; sequence GIKQFFVAVE…EMPMNVADLI (162 aa). Lysine 314 is covalently cross-linked (Glycyl lysine isopeptide (Lys-Gly) (interchain with G-Cter in SUMO2)). N6-acetyllysine is present on lysine 321. ATP is bound by residues aspartate 342 and 367–371; that span reads RSGRY. Glycyl lysine isopeptide (Lys-Gly) (interchain with G-Cter in SUMO2) cross-links involve residues lysine 374 and lysine 382.

The protein belongs to the DEAD box helicase family. eIF4A subfamily. Identified in the spliceosome C complex. Core component of the mRNA splicing-dependent exon junction complex (EJC); the core complex contains CASC3, EIF4A3, MAGOH or MAGOHB, and RBM8A. Interacts with CASC3, MAGOH, NXF1, RBM8A and ALYREF/THOC4. Component of the ALYREF/THOC4-EJC-RNA complex; in the complex interacts with MAGOH, RBM8A and THOC4 (via the WXHD motif); these interactions are likely specific to RNA-bound EJC. May interact with NOM1. Interacts with POLDIP3. Interacts with CWC22 and PRPF19 in an RNA-independent manner. Direct interaction with CWC22 is mediated by the helicase C-terminal domain. Full interaction with CWC22 occurs only when EIF4A3 is not part of the EJC and prevents EIF4A3 binding to RNA. Identified in a complex composed of the EJC core, UPF3B and UPF2. The EJC core can also interact with UPF3A (in vitro). Interacts with NCBP3. Interacts with NRDE2. Interacts with DHX34; the interaction is RNA-independent. In terms of tissue distribution, ubiquitously expressed.

The protein localises to the nucleus. It localises to the nucleus speckle. Its subcellular location is the cytoplasm. The enzyme catalyses ATP + H2O = ADP + phosphate + H(+). The ATPase activity is increased some 4-fold in the presence of RNA. In terms of biological role, ATP-dependent RNA helicase. Involved in pre-mRNA splicing as component of the spliceosome. Core component of the splicing-dependent multiprotein exon junction complex (EJC) deposited at splice junctions on mRNAs. The EJC is a dynamic structure consisting of core proteins and several peripheral nuclear and cytoplasmic associated factors that join the complex only transiently either during EJC assembly or during subsequent mRNA metabolism. The EJC marks the position of the exon-exon junction in the mature mRNA for the gene expression machinery and the core components remain bound to spliced mRNAs throughout all stages of mRNA metabolism thereby influencing downstream processes including nuclear mRNA export, subcellular mRNA localization, translation efficiency and nonsense-mediated mRNA decay (NMD). Its RNA-dependent ATPase and RNA-helicase activities are induced by CASC3, but abolished in presence of the MAGOH-RBM8A heterodimer, thereby trapping the ATP-bound EJC core onto spliced mRNA in a stable conformation. The inhibition of ATPase activity by the MAGOH-RBM8A heterodimer increases the RNA-binding affinity of the EJC. Involved in translational enhancement of spliced mRNAs after formation of the 80S ribosome complex. Binds spliced mRNA in sequence-independent manner, 20-24 nucleotides upstream of mRNA exon-exon junctions. Shows higher affinity for single-stranded RNA in an ATP-bound core EJC complex than after the ATP is hydrolyzed. Involved in the splicing modulation of BCL2L1/Bcl-X (and probably other apoptotic genes); specifically inhibits formation of proapoptotic isoforms such as Bcl-X(S); the function is different from the established EJC assembly. Involved in craniofacial development. The protein is Eukaryotic initiation factor 4A-III (EIF4A3) of Homo sapiens (Human).